We begin with the raw amino-acid sequence, 552 residues long: Acyl-CoA synthetase FUM10 (552 aa).

Residue 183–194 (ELFTSGTTGAPK) coordinates AMP. The tract at residues 463 to 536 (EIEHVARLHD…QEIPYNRTGK (74 aa)) is AMP-binding.

This sequence belongs to the ATP-dependent AMP-binding enzyme family.

It participates in mycotoxin biosynthesis. In terms of biological role, acyl-CoA synthetase; part of the gene cluster that mediates the biosynthesis of fumonisins B1 (FB1), B2 (FB2), B3 (FB3), and B4 (FB4), which are carcinogenic mycotoxins. Within the pathway, FUM10 is involved the addition of the tricarballylic moieties to the carbon backbone. FUM10 catalyzes the CoA activation of citrate to form tricarballylic acid. The biosynthesis starts with the FUM1-catalyzed carbon chain assembly from one molecule of acetyl-CoA, eight molecules of malonyl-CoA, and two molecules of methionine (in S-adenosyl form). The C18 polyketide chain is released from the enzyme by a nucleophilic attack of a carbanion, which is derived from R-carbon of alanine by decarboxylation, on the carbonyl carbon of polyketide acyl chain. This step is catalyzed by the pyridoxal 5'-phosphate-dependent aminoacyl transferase FUM8. The resultant 3-keto intermediate is then stereospecifically reduced to a 3-hydroxyl product by reductase FUM13. Subsequent oxidations at C-10 by the cytochrome P450 monooxygenase FUM2, C-14 and C-15 by FUM6, FUM12 or FUM15, tricarballylic esterification of the hydroxyl groups on C-14 and C-15 by acyltransferase FUM14, and C-5 hydroxylation by 2-keto-glutarate-dependent dioxygenase FUM3 furnish the biosynthesis of fumonisins. The tricarballylic moieties are most likely derived from the citric acid cycle, and their addition to the carbon backbone may involve FUM7, FUM10, FUM11 and FUM14. This chain is Acyl-CoA synthetase FUM10, found in Gibberella moniliformis (strain M3125 / FGSC 7600) (Maize ear and stalk rot fungus).